A 102-amino-acid polypeptide reads, in one-letter code: Large ribosomal subunit protein uL23 (102 aa).

The protein belongs to the universal ribosomal protein uL23 family. Part of the 50S ribosomal subunit. Contacts protein L29, and trigger factor when it is bound to the ribosome.

Its function is as follows. One of the early assembly proteins it binds 23S rRNA. One of the proteins that surrounds the polypeptide exit tunnel on the outside of the ribosome. Forms the main docking site for trigger factor binding to the ribosome. The polypeptide is Large ribosomal subunit protein uL23 (Paramagnetospirillum magneticum (strain ATCC 700264 / AMB-1) (Magnetospirillum magneticum)).